The chain runs to 343 residues: D-alanine--D-alanine ligase (343 aa).

Residues 132–337 (KNLFSYHKIP…YPDLIDKLIE (206 aa)) enclose the ATP-grasp domain. Residue 165 to 220 (DRFLGWPCFVKPANMGSSIGVSKVHSPGEVKKALEKGFYYDRKLIFEEFVEGREIE) coordinates ATP. 3 residues coordinate Mg(2+): Asp-291, Glu-304, and Asn-306.

It belongs to the D-alanine--D-alanine ligase family. Mg(2+) serves as cofactor. The cofactor is Mn(2+).

The protein resides in the cytoplasm. It catalyses the reaction 2 D-alanine + ATP = D-alanyl-D-alanine + ADP + phosphate + H(+). The protein operates within cell wall biogenesis; peptidoglycan biosynthesis. Its function is as follows. Cell wall formation. The chain is D-alanine--D-alanine ligase from Halothermothrix orenii (strain H 168 / OCM 544 / DSM 9562).